Reading from the N-terminus, the 238-residue chain is uncharacterized protein (238 aa).

The first 20 residues, 1–20 (MNNVKLLIAGSAFFAMSAQA), serve as a signal peptide directing secretion.

This sequence to E.coli GltF.

This is an uncharacterized protein from Escherichia coli (strain K12).